The primary structure comprises 460 residues: Alpha-amylase (460 aa).

The signal sequence occupies residues 1–21 (MASRTLSGALALAAAATAVLA). Residues asparagine 121, glutamine 167, and aspartate 176 each contribute to the Ca(2+) site. Aspartate 206 (nucleophile) is an active-site residue. Ca(2+) is bound at residue histidine 210. Residue glutamate 233 is the Proton donor of the active site.

Belongs to the glycosyl hydrolase 13 family. As to quaternary structure, monomer. It depends on Ca(2+) as a cofactor.

It carries out the reaction Endohydrolysis of (1-&gt;4)-alpha-D-glucosidic linkages in polysaccharides containing three or more (1-&gt;4)-alpha-linked D-glucose units.. The sequence is that of Alpha-amylase (amy) from Streptomyces thermoviolaceus.